The chain runs to 255 residues: ETS-related transcription factor Elf-5 (255 aa).

In terms of domain architecture, PNT spans Tyr-33–Gly-119. Residues Ser-163–Gly-244 constitute a DNA-binding region (ETS).

This sequence belongs to the ETS family.

It localises to the nucleus. Functionally, transcriptionally activator that may play a role in regulating the later stages of keratinocytes terminal differentiation. Binds to DNA sequences containing the consensus nucleotide core sequence GGA[AT]. In Bos taurus (Bovine), this protein is ETS-related transcription factor Elf-5 (ELF5).